Consider the following 193-residue polypeptide: FMN-dependent NADH:quinone oxidoreductase 1 (193 aa).

Residues S9, S15 to S17, and M85 to F88 contribute to the FMN site.

The protein belongs to the azoreductase type 1 family. In terms of assembly, homodimer. FMN is required as a cofactor.

The enzyme catalyses 2 a quinone + NADH + H(+) = 2 a 1,4-benzosemiquinone + NAD(+). It carries out the reaction N,N-dimethyl-1,4-phenylenediamine + anthranilate + 2 NAD(+) = 2-(4-dimethylaminophenyl)diazenylbenzoate + 2 NADH + 2 H(+). Quinone reductase that provides resistance to thiol-specific stress caused by electrophilic quinones. Its function is as follows. Also exhibits azoreductase activity. Catalyzes the reductive cleavage of the azo bond in aromatic azo compounds to the corresponding amines. This is FMN-dependent NADH:quinone oxidoreductase 1 from Xanthomonas axonopodis pv. citri (strain 306).